Here is a 155-residue protein sequence, read N- to C-terminus: Small ribosomal subunit protein uS7c (155 aa).

Belongs to the universal ribosomal protein uS7 family. As to quaternary structure, part of the 30S ribosomal subunit.

Its subcellular location is the plastid. It localises to the chloroplast. In terms of biological role, one of the primary rRNA binding proteins, it binds directly to 16S rRNA where it nucleates assembly of the head domain of the 30S subunit. The protein is Small ribosomal subunit protein uS7c (rps7) of Typha angustifolia (Narrow leaf cattail).